Consider the following 286-residue polypeptide: Polyamine aminopropyltransferase (286 aa).

Residues 5–238 (PLWHETLHDH…GIMTFAWASD (234 aa)) enclose the PABS domain. Gln-33 provides a ligand contact to S-methyl-5'-thioadenosine. 2 residues coordinate spermidine: His-64 and Asp-88. S-methyl-5'-thioadenosine is bound by residues Glu-108 and 140–141 (DG). The active-site Proton acceptor is Asp-158. 158 to 161 (DCTD) is a spermidine binding site. Pro-165 is a binding site for S-methyl-5'-thioadenosine.

Belongs to the spermidine/spermine synthase family. In terms of assembly, homodimer or homotetramer.

It is found in the cytoplasm. It catalyses the reaction S-adenosyl 3-(methylsulfanyl)propylamine + putrescine = S-methyl-5'-thioadenosine + spermidine + H(+). It participates in amine and polyamine biosynthesis; spermidine biosynthesis; spermidine from putrescine: step 1/1. Functionally, catalyzes the irreversible transfer of a propylamine group from the amino donor S-adenosylmethioninamine (decarboxy-AdoMet) to putrescine (1,4-diaminobutane) to yield spermidine. The protein is Polyamine aminopropyltransferase of Klebsiella pneumoniae subsp. pneumoniae (strain ATCC 700721 / MGH 78578).